The chain runs to 796 residues: Armadillo repeat-containing protein wrm-1 (796 aa).

The disordered stretch occupies residues asparagine 17–asparagine 59. One copy of the ARM repeat lies at glutamate 462–glycine 504.

As to quaternary structure, interacts (independently of ARM repeat) with nhr-25. Component of the beta-catenin-lit-1 complex (also called the lit-1/wrm-1 complex or the wrm-1/lit-1 kinase complex) at least composed of lit-1 and wrm-1. Interacts (via N-terminus) with lit-1; the interaction is direct and activates lit-1 kinase activity which leads to the phosphorylation of pop-1. This promotes pop-1 interaction with par-5 and translocation of pop-1 from the nucleus to the cytoplasm.

The protein localises to the cytoplasm. Its subcellular location is the cell cortex. It is found in the nucleus. Its function is as follows. Antagonistic role in the Wnt signaling pathway that operates in embryogenesis. When located at the cortex it has been shown to inhibit Wnt signaling during asymmetric cell division but when relocated to the nucleus it shows positive regulation. Has a role in blastomere signaling during endoderm specification. Component of the beta-catenin-lit-1 complex which promotes phosphorylation, down-regulation and subcellular relocation of pop-1. Within the complex, activates lit-1-dependent kinase activity. Can substitute for bar-1 indicating functional redundancy. Appears to have a role in centrosome positioning and can activation transcription in yeast. Involved in the development of distal tip cells (DTC) by regulating the asymmetric distribution of cye-1 and cki-1 between the daughters of Z1.a and Z4.p cells. The protein is Armadillo repeat-containing protein wrm-1 of Caenorhabditis elegans.